We begin with the raw amino-acid sequence, 463 residues long: UDP-N-acetylmuramate--L-alanine ligase (463 aa).

ATP is bound at residue 112–118; that stretch reads GTHGKTT.

This sequence belongs to the MurCDEF family.

The protein localises to the cytoplasm. It carries out the reaction UDP-N-acetyl-alpha-D-muramate + L-alanine + ATP = UDP-N-acetyl-alpha-D-muramoyl-L-alanine + ADP + phosphate + H(+). It participates in cell wall biogenesis; peptidoglycan biosynthesis. Cell wall formation. This chain is UDP-N-acetylmuramate--L-alanine ligase, found in Dechloromonas aromatica (strain RCB).